Reading from the N-terminus, the 92-residue chain is Small ribosomal subunit protein uS19 (92 aa).

Belongs to the universal ribosomal protein uS19 family.

In terms of biological role, protein S19 forms a complex with S13 that binds strongly to the 16S ribosomal RNA. The protein is Small ribosomal subunit protein uS19 of Rhodospirillum centenum (strain ATCC 51521 / SW).